The sequence spans 386 residues: Phosphoglycerate kinase (386 aa).

Residues 21–23, R36, 59–62, R112, and R145 each bind substrate; these read DLN and HLGR. ATP contacts are provided by residues K196, E313, and 339–342; that span reads GGDT.

Belongs to the phosphoglycerate kinase family. As to quaternary structure, monomer.

The protein resides in the cytoplasm. The catalysed reaction is (2R)-3-phosphoglycerate + ATP = (2R)-3-phospho-glyceroyl phosphate + ADP. It functions in the pathway carbohydrate degradation; glycolysis; pyruvate from D-glyceraldehyde 3-phosphate: step 2/5. The protein is Phosphoglycerate kinase of Haemophilus influenzae (strain PittGG).